The sequence spans 153 residues: Cytochrome c-554 (153 aa).

The N-terminal stretch at 1 to 20 is a signal peptide; that stretch reads MRPIPALALTFSLVAMPALA. Residue Gln21 is modified to Pyrrolidone carboxylic acid. Residues Met37, Cys142, Cys145, and His146 each coordinate heme c.

In terms of processing, binds 1 heme c group covalently per subunit.

Its subcellular location is the periplasm. In terms of biological role, monoheme c-type cytochrome, that is particularly expressed when cells generate energy via aerobic respiration. This chain is Cytochrome c-554 (cycF), found in Cereibacter sphaeroides (strain ATCC 17023 / DSM 158 / JCM 6121 / CCUG 31486 / LMG 2827 / NBRC 12203 / NCIMB 8253 / ATH 2.4.1.) (Rhodobacter sphaeroides).